Here is a 661-residue protein sequence, read N- to C-terminus: DNA ligase (661 aa).

NAD(+)-binding positions include 31–35 (DKEYD), 79–80 (SL), and glutamate 112. The N6-AMP-lysine intermediate role is filled by lysine 114. Residues arginine 135, glutamate 169, lysine 281, and lysine 305 each contribute to the NAD(+) site. Cysteine 398, cysteine 401, cysteine 414, and cysteine 420 together coordinate Zn(2+). The BRCT domain occupies 578–661 (QQENIFLGKT…ISEAEFEAML (84 aa)).

It belongs to the NAD-dependent DNA ligase family. LigA subfamily. It depends on Mg(2+) as a cofactor. Mn(2+) is required as a cofactor.

It catalyses the reaction NAD(+) + (deoxyribonucleotide)n-3'-hydroxyl + 5'-phospho-(deoxyribonucleotide)m = (deoxyribonucleotide)n+m + AMP + beta-nicotinamide D-nucleotide.. DNA ligase that catalyzes the formation of phosphodiester linkages between 5'-phosphoryl and 3'-hydroxyl groups in double-stranded DNA using NAD as a coenzyme and as the energy source for the reaction. It is essential for DNA replication and repair of damaged DNA. This Alkaliphilus oremlandii (strain OhILAs) (Clostridium oremlandii (strain OhILAs)) protein is DNA ligase.